Here is a 599-residue protein sequence, read N- to C-terminus: Matrix metallopeptidase-21 (599 aa).

The signal sequence occupies residues 1–20; that stretch reads MLTVIRRIFIIQTFIFITAE. Residues 21 to 170 constitute a propeptide that is removed on maturation; that stretch reads KIFHSRDHSD…NHEHQAPVRK (150 aa). Cysteine 130 serves as a coordination point for Zn(2+). The interval 141-170 is disordered; sequence DVTGSNSTRNHIRTSTNTSHNHEHQAPVRK. A compositionally biased stretch (polar residues) spans 143 to 159; that stretch reads TGSNSTRNHIRTSTNTS. Histidine 309 is a Zn(2+) binding site. Glutamate 310 is a catalytic residue. Zn(2+)-binding residues include histidine 313 and histidine 319. A disulfide bridge links cysteine 355 with cysteine 586. 4 Hemopexin repeats span residues 356-415, 417-473, 474-522, and 529-585; these read TGRF…WHGL, SGGV…FPGV, SGPL…FPAI, and VRSL…WFDI. Asparagine 398 carries an N-linked (GlcNAc...) asparagine glycan.

The protein belongs to the peptidase M10A family. The precursor is cleaved by a furin endopeptidase.

In terms of biological role, plays a specialized role in the generation of left-right asymmetry during embryogenesis. May act as a negative regulator of the NOTCH-signaling pathway. The chain is Matrix metallopeptidase-21 from Danio rerio (Zebrafish).